The chain runs to 172 residues: 3-hydroxydecanoyl-[acyl-carrier-protein] dehydratase (172 aa).

The active site involves His-71.

It belongs to the thioester dehydratase family. FabA subfamily. Homodimer.

The protein localises to the cytoplasm. It catalyses the reaction a (3R)-hydroxyacyl-[ACP] = a (2E)-enoyl-[ACP] + H2O. The enzyme catalyses (3R)-hydroxydecanoyl-[ACP] = (2E)-decenoyl-[ACP] + H2O. The catalysed reaction is (2E)-decenoyl-[ACP] = (3Z)-decenoyl-[ACP]. It participates in lipid metabolism; fatty acid biosynthesis. Necessary for the introduction of cis unsaturation into fatty acids. Catalyzes the dehydration of (3R)-3-hydroxydecanoyl-ACP to E-(2)-decenoyl-ACP and then its isomerization to Z-(3)-decenoyl-ACP. Can catalyze the dehydratase reaction for beta-hydroxyacyl-ACPs with saturated chain lengths up to 16:0, being most active on intermediate chain length. The protein is 3-hydroxydecanoyl-[acyl-carrier-protein] dehydratase of Escherichia coli (strain 55989 / EAEC).